A 512-amino-acid chain; its full sequence is Tabersonine 16-hydroxylase 2 (512 aa).

Residue M1 is a topological domain, lumenal. The chain crosses the membrane as a helical span at residues 2–22; it reads ELYYFSTFAFLLFCFILAKTL. Topologically, residues 23-512 are cytoplasmic; it reads KKSGQSNLKL…YSASSLKGKY (490 aa). C445 serves as a coordination point for heme.

It belongs to the cytochrome P450 family. Heme serves as cofactor. Expressed at low levels in roots, fruits, stems, flower buds and flowers, but highly expressed in young leaves. Detected in adaxial and abaxial epidermis cells.

The protein localises to the endoplasmic reticulum membrane. It carries out the reaction (-)-tabersonine + reduced [NADPH--hemoprotein reductase] + O2 = 16-hydroxytabersonine + oxidized [NADPH--hemoprotein reductase] + H2O + H(+). Its function is as follows. Involved in the foliar biosynthesis of vindoline, a precursor of vinblastine and vincristine. Hydroxylates specifically tabersonine, 2,3-dihydrotabersonine and 2,3-dihydro-3-hydroxytabersonine, but has no activity with naringenin, tryptamine, secologanin, strictosidine, ajmalicine, vindoline and catharanthine. In Catharanthus roseus (Madagascar periwinkle), this protein is Tabersonine 16-hydroxylase 2.